We begin with the raw amino-acid sequence, 105 residues long: Large ribosomal subunit protein uL23 (105 aa).

Belongs to the universal ribosomal protein uL23 family. Part of the 50S ribosomal subunit. Contacts protein L29, and trigger factor when it is bound to the ribosome.

Functionally, one of the early assembly proteins it binds 23S rRNA. One of the proteins that surrounds the polypeptide exit tunnel on the outside of the ribosome. Forms the main docking site for trigger factor binding to the ribosome. The polypeptide is Large ribosomal subunit protein uL23 (Ureaplasma parvum serovar 3 (strain ATCC 27815 / 27 / NCTC 11736)).